Reading from the N-terminus, the 473-residue chain is Serine palmitoyltransferase 1 (473 aa).

Residues 1-15 (MATVAEQWVLVEMVQ) are Lumenal-facing. Residues 1 to 66 (MATVAEQWVL…KEELIEEWQP (66 aa)) are interaction with SPTLC2. Residues 16-36 (ALYEAPAYHLILEGILILWII) form a helical membrane-spanning segment. At 37-473 (RLVFSKTYKL…IREAAQAVLL (437 aa)) the chain is on the cytoplasmic side. Y164 carries the phosphotyrosine; by ABL modification.

It belongs to the class-II pyridoxal-phosphate-dependent aminotransferase family. As to quaternary structure, component of the serine palmitoyltransferase (SPT) complex, which is also composed of SPTLC2 or SPTLC3 and SPTSSA or SPTSSB. The heterodimer with SPTLC2 or SPTLC3 forms the catalytic core of the enzyme, while SPTSSA or SPTSSB subunits determine substrate specificity. SPT also interacts with ORMDL proteins, especially ORMDL3, which negatively regulate SPT activity in the presence of ceramides. Forms dimers of heterodimers with SPTLC2. Interacts with RTN4 (isoform B). The cofactor is pyridoxal 5'-phosphate. Post-translationally, phosphorylation at Tyr-164 inhibits activity and promotes cell survival. In terms of tissue distribution, expressed in astrocytes.

It localises to the endoplasmic reticulum membrane. The enzyme catalyses L-serine + hexadecanoyl-CoA + H(+) = 3-oxosphinganine + CO2 + CoA. It catalyses the reaction octadecanoyl-CoA + L-serine + H(+) = 3-oxoeicosasphinganine + CO2 + CoA. It carries out the reaction tetradecanoyl-CoA + L-serine + H(+) = 3-oxohexadecasphinganine + CO2 + CoA. The catalysed reaction is dodecanoyl-CoA + L-serine + H(+) = 3-oxotetradecasphinganine + CO2 + CoA. It functions in the pathway lipid metabolism; sphingolipid metabolism. With respect to regulation, SPT complex catalytic activity is negatively regulated by ORMDL proteins, including ORMDL3, in the presence of ceramides. This mechanism allows to maintain ceramide levels at sufficient concentrations for the production of complex sphingolipids, but which prevents the accumulation of ceramides to levels that trigger apoptosis. In terms of biological role, component of the serine palmitoyltransferase multisubunit enzyme (SPT) that catalyzes the initial and rate-limiting step in sphingolipid biosynthesis by condensing L-serine and activated acyl-CoA (most commonly palmitoyl-CoA) to form long-chain bases. The SPT complex is also composed of SPTLC2 or SPTLC3 and SPTSSA or SPTSSB. Within this complex, the heterodimer with SPTLC2 or SPTLC3 forms the catalytic core. The composition of the serine palmitoyltransferase (SPT) complex determines the substrate preference. The SPTLC1-SPTLC2-SPTSSA complex shows a strong preference for C16-CoA substrate, while the SPTLC1-SPTLC3-SPTSSA isozyme uses both C14-CoA and C16-CoA as substrates, with a slight preference for C14-CoA. The SPTLC1-SPTLC2-SPTSSB complex shows a strong preference for C18-CoA substrate, while the SPTLC1-SPTLC3-SPTSSB isozyme displays an ability to use a broader range of acyl-CoAs, without apparent preference. Required for adipocyte cell viability and metabolic homeostasis. In Rattus norvegicus (Rat), this protein is Serine palmitoyltransferase 1.